We begin with the raw amino-acid sequence, 540 residues long: Bifunctional ribokinase/ribose-5-phosphate isomerase A (540 aa).

The segment at methionine 1–glutamine 308 is ribokinase. Substrate contacts are provided by residues asparagine 11–aspartate 13, glycine 39–asparagine 44, and glutamate 141. ATP-binding positions include asparagine 185 and threonine 221 to glycine 226. Aspartate 247 and threonine 249 together coordinate K(+). Glycine 252–aspartate 253 is a binding site for ATP. A substrate-binding site is contributed by aspartate 253. The active-site Proton acceptor; for ribokinase activity is the aspartate 253. K(+) contacts are provided by threonine 284, valine 287, glycine 289, and serine 293. The interval methionine 309 to serine 540 is ribose-5-phosphate isomerase A. Substrate contacts are provided by residues serine 339 to threonine 342, aspartate 395 to aspartate 398, and lysine 408 to glycine 411. Glutamate 417 serves as the catalytic Proton acceptor; for ribose-5-phosphate isomerase activity. Lysine 435 is a binding site for substrate.

It in the N-terminal section; belongs to the carbohydrate kinase PfkB family. Ribokinase subfamily. The protein in the C-terminal section; belongs to the ribose 5-phosphate isomerase family. Mg(2+) is required as a cofactor.

Its subcellular location is the cytoplasm. The enzyme catalyses D-ribose + ATP = D-ribose 5-phosphate + ADP + H(+). It carries out the reaction aldehydo-D-ribose 5-phosphate = D-ribulose 5-phosphate. It participates in carbohydrate metabolism; D-ribose degradation; D-ribose 5-phosphate from beta-D-ribopyranose: step 2/2. The protein operates within carbohydrate degradation; pentose phosphate pathway; D-ribose 5-phosphate from D-ribulose 5-phosphate (non-oxidative stage): step 1/1. With respect to regulation, activated by a monovalent cation that binds near, but not in, the active site. The most likely occupant of the site in vivo is potassium. Also activated by ammonium ion. Ion binding induces a conformational change that may alter substrate affinity. Bifunctional enzyme that catalyzes the phosphorylation of ribose at O-5 in a reaction requiring ATP and magnesium, and the reversible conversion of ribose 5-phosphate to ribulose 5-phosphate. This Fructilactobacillus sanfranciscensis (strain ATCC 27651 / DSM 20451 / JCM 5668 / CCUG 30143 / KCTC 3205 / NCIMB 702811 / NRRL B-3934 / L-12) (Lactobacillus sanfranciscensis) protein is Bifunctional ribokinase/ribose-5-phosphate isomerase A (rbsK/rbiA).